We begin with the raw amino-acid sequence, 513 residues long: Histidine ammonia-lyase (513 aa).

Residues 144-146 (ASG) constitute a cross-link (5-imidazolinone (Ala-Gly)). Serine 145 carries the post-translational modification 2,3-didehydroalanine (Ser).

Belongs to the PAL/histidase family. Contains an active site 4-methylidene-imidazol-5-one (MIO), which is formed autocatalytically by cyclization and dehydration of residues Ala-Ser-Gly.

Its subcellular location is the cytoplasm. The catalysed reaction is L-histidine = trans-urocanate + NH4(+). Its pathway is amino-acid degradation; L-histidine degradation into L-glutamate; N-formimidoyl-L-glutamate from L-histidine: step 1/3. This Streptococcus gordonii (strain Challis / ATCC 35105 / BCRC 15272 / CH1 / DL1 / V288) protein is Histidine ammonia-lyase.